A 311-amino-acid polypeptide reads, in one-letter code: p-hydroxybenzoic acid efflux pump subunit AaeA (311 aa).

A helical transmembrane segment spans residues Ile11–Phe31.

Belongs to the membrane fusion protein (MFP) (TC 8.A.1) family.

The protein localises to the cell inner membrane. Functionally, forms an efflux pump with AaeB. The polypeptide is p-hydroxybenzoic acid efflux pump subunit AaeA (Serratia proteamaculans (strain 568)).